Reading from the N-terminus, the 61-residue chain is Small ribosomal subunit protein uS14 (61 aa).

Residues cysteine 24, cysteine 27, cysteine 40, and cysteine 43 each coordinate Zn(2+).

This sequence belongs to the universal ribosomal protein uS14 family. Zinc-binding uS14 subfamily. In terms of assembly, part of the 30S ribosomal subunit. Contacts proteins S3 and S10. Zn(2+) is required as a cofactor.

Its function is as follows. Binds 16S rRNA, required for the assembly of 30S particles and may also be responsible for determining the conformation of the 16S rRNA at the A site. The protein is Small ribosomal subunit protein uS14 of Streptococcus mutans serotype c (strain ATCC 700610 / UA159).